Here is an 83-residue protein sequence, read N- to C-terminus: MDRLEHTMMFKSQGGDVSPQEILQQVYVALEEKGYDPINQLVGYLMSGDPVYITSHNQARSLIRKLERYELLEELVRSYLQEK.

It belongs to the UPF0297 family.

The sequence is that of UPF0297 protein DSY2420 from Desulfitobacterium hafniense (strain Y51).